The following is a 383-amino-acid chain: Chitinase-3-like protein 1 (383 aa).

Residues 1–21 (MGVKASQTGFVVLVLLQCCSA) form the signal peptide. The GH18 domain occupies 22–383 (YKLVCYYTSW…NAIKDALAAT (362 aa)). Cysteine 26 and cysteine 51 are oxidised to a cystine. A glycan (N-linked (GlcNAc...) asparagine) is linked at asparagine 60. Chitin contacts are provided by residues 70 to 71 (EW), 97 to 100 (GGWN), tyrosine 141, 204 to 207 (MTYD), and arginine 263. An intrachain disulfide couples cysteine 300 to cysteine 364. The important for AKT1 activation and IL8 production stretch occupies residues 324-338 (QWVGYDDQESVKSKV). Position 352 (tryptophan 352) interacts with chitin.

It belongs to the glycosyl hydrolase 18 family. Monomer. In terms of processing, glycosylated. In terms of tissue distribution, present in activated macrophages, articular chondrocytes, synovial cells as well as in liver. Very low or undetectable expression in non-inflammatory colon. Undetectable in muscle tissues, lung, pancreas, mononuclear cells, or fibroblasts.

It localises to the secreted. The protein localises to the extracellular space. Its subcellular location is the cytoplasm. The protein resides in the perinuclear region. It is found in the endoplasmic reticulum. Carbohydrate-binding lectin with a preference for chitin. Has no chitinase activity. May play a role in tissue remodeling and in the capacity of cells to respond to and cope with changes in their environment. Plays a role in T-helper cell type 2 (Th2) inflammatory response and IL-13-induced inflammation, regulating allergen sensitization, inflammatory cell apoptosis, dendritic cell accumulation and M2 macrophage differentiation. Facilitates invasion of pathogenic enteric bacteria into colonic mucosa and lymphoid organs. Mediates activation of AKT1 signaling pathway and subsequent IL8 production in colonic epithelial cells. Regulates antibacterial responses in lung by contributing to macrophage bacterial killing, controlling bacterial dissemination and augmenting host tolerance. Also regulates hyperoxia-induced injury, inflammation and epithelial apoptosis in lung. The chain is Chitinase-3-like protein 1 (CHI3L1) from Homo sapiens (Human).